The chain runs to 150 residues: Large ribosomal subunit protein uL13 (150 aa).

The interval 130 to 150 (EHPHAAQQPKTLQLDPAASAQ) is disordered.

It belongs to the universal ribosomal protein uL13 family. In terms of assembly, part of the 50S ribosomal subunit.

Its function is as follows. This protein is one of the early assembly proteins of the 50S ribosomal subunit, although it is not seen to bind rRNA by itself. It is important during the early stages of 50S assembly. In Synechococcus sp. (strain CC9311), this protein is Large ribosomal subunit protein uL13.